A 322-amino-acid chain; its full sequence is Germ cell-specific gene 1-like protein (322 aa).

Topologically, residues 1-8 (MKTSRRGR) are cytoplasmic. The helical transmembrane segment at 9–29 (ALLAVALNLLALLFATTAFLT) threads the bilayer. Over 30-122 (TYWCQGTQRV…FIDLAPASEK (93 aa)) the chain is Extracellular. A helical membrane pass occupies residues 123 to 143 (GVLWLSVVSEVLYILLLVVGF). Residues 144–163 (SLMCLELVHSSSVIDGLKLN) lie on the Cytoplasmic side of the membrane. Residues 164 to 184 (AFAAVFTVLSGLLGMVAHMMY) form a helical membrane-spanning segment. The Extracellular portion of the chain corresponds to 185 to 207 (TQVFQVTVSLGPEDWRPHSWDYG). Residues 208–228 (WSFCLAWGSFTCCMAASVTTL) traverse the membrane as a helical segment. Residues 229–322 (NSYTKTVIEF…RQCWVLGHWV (94 aa)) lie on the Cytoplasmic side of the membrane. Ser-274 bears the Phosphoserine mark.

This sequence belongs to the GSG1 family. In terms of assembly, component of the inner core of AMPAR complexes. AMPAR complexes consist of an inner core made of 4 pore-forming GluA/GRIA proteins (GRIA1, GRIA2, GRIA3 and GRIA4) and 4 major auxiliary subunits arranged in a twofold symmetry. One of the two pairs of distinct binding sites is occupied either by CNIH2, CNIH3 or CACNG2, CACNG3. The other harbors CACNG2, CACNG3, CACNG4, CACNG8 or GSG1L. This inner core of AMPAR complexes is complemented by outer core constituents binding directly to the GluA/GRIA proteins at sites distinct from the interaction sites of the inner core constituents. Outer core constituents include at least PRRT1, PRRT2, CKAMP44/SHISA9, FRRS1L and NRN1. The proteins of the inner and outer core serve as a platform for other, more peripherally associated AMPAR constituents. Alone or in combination, these auxiliary subunits control the gating and pharmacology of the AMPAR complexes and profoundly impact their biogenesis and protein processing. As to expression, expressed in the brain, including hippocampus (at protein level).

It localises to the cell membrane. It is found in the synapse. In terms of biological role, as a component of the inner core of AMPAR complexes, modifies AMPA receptor (AMPAR) gating. This Mus musculus (Mouse) protein is Germ cell-specific gene 1-like protein (Gsg1l).